A 747-amino-acid chain; its full sequence is Photosystem I P700 chlorophyll a apoprotein A2 (747 aa).

The next 8 helical transmembrane spans lie at 46-69 (LFAT…FHIA), 135-158 (LFQG…LHLQ), 175-199 (LNHH…HVAI), 273-291 (IAHH…GHMY), 341-364 (LHFQ…QHMG), 380-406 (SALY…IFFV), 428-450 (ALIS…IYVH), and 530-548 (FLVH…LILI). [4Fe-4S] cluster contacts are provided by C572 and C581. 2 consecutive transmembrane segments (helical) span residues 588-609 (ATYL…YWHW) and 656-678 (LSPW…MFLI). Divinyl chlorophyll a is bound by residues H667, M675, and Y683. W684 contributes to the phylloquinone binding site. Residues 720–740 (LVGLTHFTVGNFVTFGAFVIA) traverse the membrane as a helical segment.

Belongs to the PsaA/PsaB family. As to quaternary structure, the PsaA/B heterodimer binds the P700 divinyl chlorophyll special pair and subsequent electron acceptors. PSI consists of a core antenna complex that captures photons, and an electron transfer chain that converts photonic excitation into a charge separation. The cyanobacterial PSI reaction center is composed of one copy each of PsaA,B,C,D,E,F,I,J,K,L,M and X, and forms trimeric complexes. The cofactor is PSI electron transfer chain: 5 divinyl chlorophyll a, 1 divinyl chlorophyll a', 2 phylloquinones and 3 4Fe-4S clusters. PSI core antenna: 90 divinyl chlorophyll a, 22 carotenoids, 3 phospholipids and 1 galactolipid. P700 is a divinyl chlorophyll a/divinyl chlorophyll a' dimer, A0 is one or more divinyl chlorophyll a, A1 is one or both phylloquinones and FX is a shared 4Fe-4S iron-sulfur center..

Its subcellular location is the cellular thylakoid membrane. The enzyme catalyses reduced [plastocyanin] + hnu + oxidized [2Fe-2S]-[ferredoxin] = oxidized [plastocyanin] + reduced [2Fe-2S]-[ferredoxin]. PsaA and PsaB bind P700, the primary electron donor of photosystem I (PSI), as well as the electron acceptors A0, A1 and FX. PSI is a plastocyanin/cytochrome c6-ferredoxin oxidoreductase, converting photonic excitation into a charge separation, which transfers an electron from the donor P700 chlorophyll pair to the spectroscopically characterized acceptors A0, A1, FX, FA and FB in turn. Oxidized P700 is reduced on the lumenal side of the thylakoid membrane by plastocyanin or cytochrome c6. The protein is Photosystem I P700 chlorophyll a apoprotein A2 of Prochlorococcus marinus (strain SARG / CCMP1375 / SS120).